The chain runs to 466 residues: 3-isopropylmalate dehydratase large subunit (466 aa).

Positions 347, 407, and 410 each coordinate [4Fe-4S] cluster.

Belongs to the aconitase/IPM isomerase family. LeuC type 1 subfamily. In terms of assembly, heterodimer of LeuC and LeuD. The cofactor is [4Fe-4S] cluster.

The enzyme catalyses (2R,3S)-3-isopropylmalate = (2S)-2-isopropylmalate. Its pathway is amino-acid biosynthesis; L-leucine biosynthesis; L-leucine from 3-methyl-2-oxobutanoate: step 2/4. In terms of biological role, catalyzes the isomerization between 2-isopropylmalate and 3-isopropylmalate, via the formation of 2-isopropylmaleate. This is 3-isopropylmalate dehydratase large subunit from Escherichia fergusonii (strain ATCC 35469 / DSM 13698 / CCUG 18766 / IAM 14443 / JCM 21226 / LMG 7866 / NBRC 102419 / NCTC 12128 / CDC 0568-73).